The primary structure comprises 170 residues: Crossover junction endodeoxyribonuclease RuvC (170 aa).

Catalysis depends on residues aspartate 11, glutamate 71, and aspartate 143. Mg(2+)-binding residues include aspartate 11, glutamate 71, and aspartate 143.

It belongs to the RuvC family. In terms of assembly, homodimer which binds Holliday junction (HJ) DNA. The HJ becomes 2-fold symmetrical on binding to RuvC with unstacked arms; it has a different conformation from HJ DNA in complex with RuvA. In the full resolvosome a probable DNA-RuvA(4)-RuvB(12)-RuvC(2) complex forms which resolves the HJ. It depends on Mg(2+) as a cofactor.

Its subcellular location is the cytoplasm. It catalyses the reaction Endonucleolytic cleavage at a junction such as a reciprocal single-stranded crossover between two homologous DNA duplexes (Holliday junction).. The RuvA-RuvB-RuvC complex processes Holliday junction (HJ) DNA during genetic recombination and DNA repair. Endonuclease that resolves HJ intermediates. Cleaves cruciform DNA by making single-stranded nicks across the HJ at symmetrical positions within the homologous arms, yielding a 5'-phosphate and a 3'-hydroxyl group; requires a central core of homology in the junction. The consensus cleavage sequence is 5'-(A/T)TT(C/G)-3'. Cleavage occurs on the 3'-side of the TT dinucleotide at the point of strand exchange. HJ branch migration catalyzed by RuvA-RuvB allows RuvC to scan DNA until it finds its consensus sequence, where it cleaves and resolves the cruciform DNA. The sequence is that of Crossover junction endodeoxyribonuclease RuvC from Rhizobium rhizogenes (strain K84 / ATCC BAA-868) (Agrobacterium radiobacter).